We begin with the raw amino-acid sequence, 108 residues long: Ig kappa chain V-V region HP 123E6 (108 aa).

The interval aspartate 1–cysteine 23 is framework-1. Cysteine 23 and cysteine 88 are joined by a disulfide. A complementarity-determining-1 region spans residues arginine 24–asparagine 34. The interval tryptophan 35–tyrosine 49 is framework-2. Residues tyrosine 50–serine 56 form a complementarity-determining-2 region. The tract at residues glycine 57–cysteine 88 is framework-3. Positions glutamine 89–threonine 97 are complementarity-determining-3. Residues phenylalanine 98–arginine 108 form a framework-4 region.

This Mus musculus (Mouse) protein is Ig kappa chain V-V region HP 123E6.